The primary structure comprises 332 residues: Methionine import ATP-binding protein MetN (332 aa).

The 240-residue stretch at I2–Y241 folds into the ABC transporter domain. G38–S45 is a binding site for ATP.

Belongs to the ABC transporter superfamily. Methionine importer (TC 3.A.1.24) family. In terms of assembly, the complex is composed of two ATP-binding proteins (MetN), two transmembrane proteins (MetI) and a solute-binding protein (MetQ).

The protein resides in the cell membrane. The catalysed reaction is L-methionine(out) + ATP + H2O = L-methionine(in) + ADP + phosphate + H(+). It catalyses the reaction D-methionine(out) + ATP + H2O = D-methionine(in) + ADP + phosphate + H(+). Its function is as follows. Part of the ABC transporter complex MetNIQ involved in methionine import. Responsible for energy coupling to the transport system. The sequence is that of Methionine import ATP-binding protein MetN from Symbiobacterium thermophilum (strain DSM 24528 / JCM 14929 / IAM 14863 / T).